The primary structure comprises 111 residues: Urease subunit beta (111 aa).

It belongs to the urease beta subunit family. Heterotrimer of UreA (gamma), UreB (beta) and UreC (alpha) subunits. Three heterotrimers associate to form the active enzyme.

The protein resides in the cytoplasm. It catalyses the reaction urea + 2 H2O + H(+) = hydrogencarbonate + 2 NH4(+). Its pathway is nitrogen metabolism; urea degradation; CO(2) and NH(3) from urea (urease route): step 1/1. The protein is Urease subunit beta of Geobacillus kaustophilus (strain HTA426).